The chain runs to 345 residues: Phosphoribosylformylglycinamidine cyclo-ligase (345 aa).

This sequence belongs to the AIR synthase family.

Its subcellular location is the cytoplasm. It carries out the reaction 2-formamido-N(1)-(5-O-phospho-beta-D-ribosyl)acetamidine + ATP = 5-amino-1-(5-phospho-beta-D-ribosyl)imidazole + ADP + phosphate + H(+). Its pathway is purine metabolism; IMP biosynthesis via de novo pathway; 5-amino-1-(5-phospho-D-ribosyl)imidazole from N(2)-formyl-N(1)-(5-phospho-D-ribosyl)glycinamide: step 2/2. This chain is Phosphoribosylformylglycinamidine cyclo-ligase, found in Ligilactobacillus salivarius (strain UCC118) (Lactobacillus salivarius).